A 260-amino-acid polypeptide reads, in one-letter code: uncharacterized protein (260 aa).

In terms of domain architecture, ABC transporter spans 4 to 231 (LHVDHVTHTY…PKELAAMLPF (228 aa)). 40–47 (GPSGCGKT) is a binding site for ATP.

It belongs to the ABC transporter superfamily.

This is an uncharacterized protein from Bacillus subtilis (strain 168).